Reading from the N-terminus, the 147-residue chain is Large ribosomal subunit protein uL15 (147 aa).

Residues 1 to 57 (MRLHDVKPQKGSKKRKKRVARGISAGQGASAGLGMRGQKSRSGSGTRPGFEGGQQPL) are disordered. A compositionally biased stretch (basic residues) spans 10 to 20 (KGSKKRKKRVA).

It belongs to the universal ribosomal protein uL15 family. In terms of assembly, part of the 50S ribosomal subunit.

Binds to the 23S rRNA. The chain is Large ribosomal subunit protein uL15 from Nostoc punctiforme (strain ATCC 29133 / PCC 73102).